Here is a 274-residue protein sequence, read N- to C-terminus: Cytochrome b-c1 complex subunit Rieske, mitochondrial (274 aa).

Over 79–103 (SHTDIKVPDFSDYRRSEVLDKTKSS) the chain is Mitochondrial matrix. The chain crosses the membrane as a helical span at residues 104–140 (RESSDARKGFSYLVTAATAVGVTYAAKSIVTQFVSSM). The Mitochondrial intermembrane portion of the chain corresponds to 141 to 274 (SASADVLAMS…FTGDDMVIVG (134 aa)). A Rieske domain is found at 187–272 (EAAVELSQLR…YEFTGDDMVI (86 aa)). Positions 217, 219, 236, 239, and 241 each coordinate [2Fe-2S] cluster. A disulfide bond links cysteine 222 and cysteine 238.

Belongs to the Rieske iron-sulfur protein family. In terms of assembly, component of the ubiquinol-cytochrome c oxidoreductase (cytochrome b-c1 complex, complex III, CIII), a multisubunit enzyme composed of 11 subunits. The complex is composed of 3 respiratory subunits cytochrome b, cytochrome c1 and Rieske protein UQCRFS1, 2 core protein subunits UQCRC1/QCR1 and UQCRC2/QCR2, and 6 low-molecular weight protein subunits UQCRH/QCR6, UQCRB/QCR7, UQCRQ/QCR8, UQCR10/QCR9, UQCR11/QCR10 and subunit 9, the cleavage product of Rieske protein UQCRFS1. The complex exists as an obligatory dimer and forms supercomplexes (SCs) in the inner mitochondrial membrane with NADH-ubiquinone oxidoreductase (complex I, CI) and cytochrome c oxidase (complex IV, CIV), resulting in different assemblies (supercomplex SCI(1)III(2)IV(1) and megacomplex MCI(2)III(2)IV(2)). Incorporation of the Rieske protein UQCRFS1 is the penultimate step in complex III assembly. Interacts with TTC19, which is involved in the clearance of UQCRFS1 fragments. As to quaternary structure, component of the ubiquinol-cytochrome c oxidoreductase (cytochrome b-c1 complex, complex III, CIII). Subunit 9 corresponds to the mitochondrial targeting sequence (MTS) of Rieske protein UQCRFS1. It is retained after processing and incorporated inside complex III, where it remains bound to the complex and localizes between the 2 core subunits UQCRC1/QCR1 and UQCRC2/QCR2. Requires [2Fe-2S] cluster as cofactor. Proteolytic processing is necessary for the correct insertion of UQCRFS1 in the complex III dimer. Several fragments are generated during UQCRFS1 insertion, most probably due to the endogenous matrix-processing peptidase (MPP) activity of the 2 core protein subunits UQCRC1/QCR1 and UQCRC2/QCR2, which are homologous to the 2 mitochondrial-processing peptidase (MPP) subunits beta-MPP and alpha-MPP respectively. The action of the protease is also necessary for the clearance of the UQCRFS1 fragments.

The protein resides in the mitochondrion inner membrane. It catalyses the reaction a quinol + 2 Fe(III)-[cytochrome c](out) = a quinone + 2 Fe(II)-[cytochrome c](out) + 2 H(+)(out). In terms of biological role, component of the ubiquinol-cytochrome c oxidoreductase, a multisubunit transmembrane complex that is part of the mitochondrial electron transport chain which drives oxidative phosphorylation. The respiratory chain contains 3 multisubunit complexes succinate dehydrogenase (complex II, CII), ubiquinol-cytochrome c oxidoreductase (cytochrome b-c1 complex, complex III, CIII) and cytochrome c oxidase (complex IV, CIV), that cooperate to transfer electrons derived from NADH and succinate to molecular oxygen, creating an electrochemical gradient over the inner membrane that drives transmembrane transport and the ATP synthase. The cytochrome b-c1 complex catalyzes electron transfer from ubiquinol to cytochrome c, linking this redox reaction to translocation of protons across the mitochondrial inner membrane, with protons being carried across the membrane as hydrogens on the quinol. In the process called Q cycle, 2 protons are consumed from the matrix, 4 protons are released into the intermembrane space and 2 electrons are passed to cytochrome c. The Rieske protein is a catalytic core subunit containing a [2Fe-2S] iron-sulfur cluster. It cycles between 2 conformational states during catalysis to transfer electrons from the quinol bound in the Q(0) site in cytochrome b to cytochrome c1. Incorporation of UQCRFS1 is the penultimate step in complex III assembly. Its function is as follows. Component of the ubiquinol-cytochrome c oxidoreductase (cytochrome b-c1 complex, complex III, CIII). UQCRFS1 undergoes proteolytic processing once it is incorporated in the complex III dimer. One of the fragments, called subunit 9, corresponds to its mitochondrial targeting sequence (MTS). The proteolytic processing is necessary for the correct insertion of UQCRFS1 in the complex III dimer, but the persistence of UQCRFS1-derived fragments may prevent newly imported UQCRFS1 to be processed and assembled into complex III and is detrimental for the complex III structure and function. The sequence is that of Cytochrome b-c1 complex subunit Rieske, mitochondrial (UQCRFS1) from Lagothrix lagotricha (Brown woolly monkey).